Here is an 827-residue protein sequence, read N- to C-terminus: Protein Jade-1 (827 aa).

The segment at 1–35 (MKRVCLPSSSEDSDDNGSLSTSWSQHSRSLPSFRH) is disordered. The segment covering 16–30 (NGSLSTSWSQHSRSL) has biased composition (polar residues). The PHD-type 1 zinc finger occupies 200 to 250 (DVVCDVCQSPDGEDGNEMVFCDKCNICVHQACYGILKVPEGSWLCRTCALG). A C2HC pre-PHD-type zinc finger spans residues 252–286 (QPKCLLCPKKGGAMKPTRSGTKWVHVSCALWIPEV). The PHD-type 2 zinc finger occupies 310-366 (LLCSLCNEKVGACIQCSIKNCRTAFHVTCAFDHGLEMKTILTQEDEVKFKSYCPKHG). 2 disordered regions span residues 622-705 (TVAK…SSSL) and 769-810 (RTKE…SSSS). Basic and acidic residues-rich tracts occupy residues 646 to 661 (SRTQ…EKPL) and 669 to 682 (KHTE…EKKR). The segment covering 692-705 (ATASSNKKQCSSSL) has biased composition (polar residues).

This sequence belongs to the JADE family. As to quaternary structure, component of the HBO1 complex composed.

The protein resides in the nucleus. The protein localises to the chromosome. It is found in the cytoplasm. It localises to the cytoskeleton. Its subcellular location is the cilium basal body. Functionally, scaffold subunit of some HBO1 complexes, which have a histone H4 acetyltransferase activity. Plays a key role in HBO1 complex by directing KAT7/HBO1 specificity towards histone H4 acetylation (H4K5ac, H4K8ac and H4K12ac), regulating DNA replication initiation, regulating DNA replication initiation. This chain is Protein Jade-1 (jade1), found in Xenopus laevis (African clawed frog).